The chain runs to 500 residues: Cytochrome P450 monooxygenase 103 (500 aa).

A run of 2 helical transmembrane segments spans residues 1 to 21 and 26 to 46; these read MAST…YLLR and PLYA…IGAL. Asn374 carries an N-linked (GlcNAc...) asparagine glycan. Position 441 (Cys441) interacts with heme.

It belongs to the cytochrome P450 family. It depends on heme as a cofactor.

Its subcellular location is the membrane. The protein operates within secondary metabolite biosynthesis. Its function is as follows. Cytochrome P450 monooxygenase that is able to use testosterone as a substrate for oxidation. The polypeptide is Cytochrome P450 monooxygenase 103 (Postia placenta (strain ATCC 44394 / Madison 698-R) (Brown rot fungus)).